The sequence spans 242 residues: Uridylate kinase (242 aa).

12-15 (KLSG) is a binding site for ATP. Positions 20–25 (GQKGYG) are involved in allosteric activation by GTP. Position 54 (G54) interacts with UMP. ATP is bound by residues G55 and R59. Residues D74 and 135-142 (TGNPYFST) each bind UMP. ATP is bound by residues Q163, Y168, and D171.

This sequence belongs to the UMP kinase family. Homohexamer.

The protein resides in the cytoplasm. It catalyses the reaction UMP + ATP = UDP + ADP. It functions in the pathway pyrimidine metabolism; CTP biosynthesis via de novo pathway; UDP from UMP (UMPK route): step 1/1. With respect to regulation, allosterically activated by GTP. Inhibited by UTP. Catalyzes the reversible phosphorylation of UMP to UDP. This is Uridylate kinase from Desulforamulus reducens (strain ATCC BAA-1160 / DSM 100696 / MI-1) (Desulfotomaculum reducens).